Here is a 388-residue protein sequence, read N- to C-terminus: NADPH-dependent butanol dehydrogenase (388 aa).

Belongs to the iron-containing alcohol dehydrogenase family.

This enzyme has activity using butanol and ethanol as substrates. This chain is NADPH-dependent butanol dehydrogenase (adh1), found in Clostridium saccharobutylicum.